We begin with the raw amino-acid sequence, 219 residues long: Large ribosomal subunit protein uL16 (219 aa).

This sequence belongs to the universal ribosomal protein uL16 family. In terms of assembly, component of the large ribosomal subunit. Mature ribosomes consist of a small (40S) and a large (60S) subunit. The 40S subunit contains about 33 different proteins and 1 molecule of RNA (18S). The 60S subunit contains about 49 different proteins and 3 molecules of RNA (28S, 5.8S and 5S).

This is Large ribosomal subunit protein uL16 (RpL10) from Bombyx mandarina (Wild silk moth).